Here is a 150-residue protein sequence, read N- to C-terminus: 3-hydroxyacyl-[acyl-carrier-protein] dehydratase FabZ (150 aa).

The active site involves histidine 54.

Belongs to the thioester dehydratase family. FabZ subfamily.

It localises to the cytoplasm. The enzyme catalyses a (3R)-hydroxyacyl-[ACP] = a (2E)-enoyl-[ACP] + H2O. Functionally, involved in unsaturated fatty acids biosynthesis. Catalyzes the dehydration of short chain beta-hydroxyacyl-ACPs and long chain saturated and unsaturated beta-hydroxyacyl-ACPs. The chain is 3-hydroxyacyl-[acyl-carrier-protein] dehydratase FabZ from Vibrio atlanticus (strain LGP32) (Vibrio splendidus (strain Mel32)).